The chain runs to 156 residues: Rhombotin-1 (156 aa).

2 consecutive LIM zinc-binding domains span residues 22 to 84 and 86 to 148; these read KGCA…LFGT and GNCA…GQLN.

In terms of tissue distribution, expressed in the brain and not in the thymus.

Its subcellular location is the nucleus. Its function is as follows. May be involved in gene regulation within neural lineage cells potentially by direct DNA binding or by binding to other transcription factors. This is Rhombotin-1 (LMO1) from Bos taurus (Bovine).